A 530-amino-acid chain; its full sequence is Phosphoenolpyruvate carboxykinase (ATP) (530 aa).

Substrate is bound by residues arginine 58, tyrosine 195, and lysine 201. ATP contacts are provided by residues lysine 201, histidine 220, and 236–244; that span reads GLSGTGKTT. Residues lysine 201 and histidine 220 each coordinate Mn(2+). Aspartate 257 is a binding site for Mn(2+). Residues glutamate 285, arginine 321, 440 to 441, and threonine 446 each bind ATP; that span reads RI. Arginine 321 contributes to the substrate binding site.

Belongs to the phosphoenolpyruvate carboxykinase (ATP) family. Mn(2+) serves as cofactor.

It is found in the cytoplasm. The enzyme catalyses oxaloacetate + ATP = phosphoenolpyruvate + ADP + CO2. Its pathway is carbohydrate biosynthesis; gluconeogenesis. Functionally, involved in the gluconeogenesis. Catalyzes the conversion of oxaloacetate (OAA) to phosphoenolpyruvate (PEP) through direct phosphoryl transfer between the nucleoside triphosphate and OAA. In Staphylococcus aureus (strain MRSA252), this protein is Phosphoenolpyruvate carboxykinase (ATP).